We begin with the raw amino-acid sequence, 369 residues long: Peptide chain release factor 2 (369 aa).

At Gln247 the chain carries N5-methylglutamine.

The protein belongs to the prokaryotic/mitochondrial release factor family. Post-translationally, methylated by PrmC. Methylation increases the termination efficiency of RF2.

The protein localises to the cytoplasm. In terms of biological role, peptide chain release factor 2 directs the termination of translation in response to the peptide chain termination codons UGA and UAA. In Phenylobacterium zucineum (strain HLK1), this protein is Peptide chain release factor 2.